A 225-amino-acid chain; its full sequence is UPF0758 protein swp_2203 (225 aa).

The MPN domain maps to 102 to 224 (ILSDPDLTRD…IVSFAERGWI (123 aa)). Histidine 173, histidine 175, and aspartate 186 together coordinate Zn(2+). Residues 173–186 (HNHPSGIAEPSTAD) carry the JAMM motif motif.

This sequence belongs to the UPF0758 family.

The polypeptide is UPF0758 protein swp_2203 (Shewanella piezotolerans (strain WP3 / JCM 13877)).